The sequence spans 311 residues: MSTENHSNYLQNKDLDNFSKTGYSNSRLSGNFFTTPQPELSFDAMTIVGNLNKTNAKKLSDFMSTEPQIRLWDILQTKFKAKALQEKVYIEYDKVKADSWDRRNMRVEFNPNKLTHEEMLWLKQNIIDYMEDDGFTRLDLAFDFEDDLSDYYAMTDKAVKKTIFYGRNGKPETKYFGVRDSDRFIRIYNKKQERKDNADVEVMSEHLWRVEIELKRDMVDYWNDCFDDLHILKPDWTTPEKVKEQAMVYLLLNEEGTWGKLERHAKYKYKQLIKEISPIDLTELMKSTLKENEKQLQKQIDFWQREFRFWK.

Belongs to the plasmid replication initiation factor family.

Its function is as follows. This protein is probably a specific topoisomerase involved in initiating replication. This protein is specifically required and may be rate-limiting for replication of the plasmid in vivo. This chain is Replication initiation protein (repD), found in Staphylococcus aureus.